The primary structure comprises 481 residues: Trichosetin biosynthesis cluster MFS transporter (481 aa).

The segment covering 1-13 has biased composition (polar residues); the sequence is MSTTPQMSQSGFQ. Positions 1–63 are disordered; sequence MSTTPQMSQS…DGPDDPQHPL (63 aa). The span at 20-31 shows a compositional bias: basic and acidic residues; it reads GAREDVGTEAQE. A glycan (N-linked (GlcNAc...) asparagine) is linked at Asn-64. Residues 72-92 form a helical membrane-spanning segment; sequence LHVGIVSLSTLAANLAATMFA. Asn-103 carries N-linked (GlcNAc...) asparagine glycosylation. Helical transmembrane passes span 111 to 131, 147 to 167, 169 to 189, 200 to 220, and 228 to 248; these read AMTV…LAPL, VYMA…FLVF, IIAG…VADL, ALFA…GGFV, and WTFR…FALM. A glycan (N-linked (GlcNAc...) asparagine) is linked at Asn-252. 5 helical membrane-spanning segments follow: residues 302-322, 353-373, 380-400, 403-423, and 446-466; these read PIVL…FLLF, LLLM…YGWT, WIVP…VVIP, IYLV…ANLL, and GWGN…PWIF.

It belongs to the major facilitator superfamily.

It localises to the cell membrane. Efflux pump required for efficient secretion of trichosetin or other secondary metabolies produced by the trichosetin gene cluster. Plays a crucial role in detoxification of the toxic trichosetin in Gibberella fujikuroi cells. The chain is Trichosetin biosynthesis cluster MFS transporter from Gibberella fujikuroi (strain CBS 195.34 / IMI 58289 / NRRL A-6831) (Bakanae and foot rot disease fungus).